Consider the following 254-residue polypeptide: Cell division protein ZapD (254 aa).

It belongs to the ZapD family. Interacts with FtsZ.

It is found in the cytoplasm. Its function is as follows. Cell division factor that enhances FtsZ-ring assembly. Directly interacts with FtsZ and promotes bundling of FtsZ protofilaments, with a reduction in FtsZ GTPase activity. The polypeptide is Cell division protein ZapD (Idiomarina loihiensis (strain ATCC BAA-735 / DSM 15497 / L2-TR)).